A 377-amino-acid chain; its full sequence is N-acetylgalactosamine-6-phosphate deacetylase (377 aa).

E125 serves as a coordination point for a divalent metal cation. Position 136 to 137 (136 to 137) interacts with substrate; that stretch reads AH. 2 residues coordinate a divalent metal cation: H191 and H212. Substrate contacts are provided by residues 215–216, R223, and 244–247; these read NG and DGHH. The Proton donor/acceptor role is filled by D269. A substrate-binding site is contributed by 302–304; the sequence is LAG.

The protein belongs to the metallo-dependent hydrolases superfamily. NagA family. Requires a divalent metal cation as cofactor.

The enzyme catalyses N-acetyl-D-galactosamine 6-phosphate + H2O = D-galactosamine 6-phosphate + acetate. Catalyzes the deacetylation of N-acetyl-D-galactosamine 6-phosphate to D-galactosamine 6-phosphate. Can probably also catalyze the deacetylation of N-acetyl-D-glucosamine 6-phosphate to D-glucosamine 6-phosphate. The chain is N-acetylgalactosamine-6-phosphate deacetylase (agaA) from Escherichia coli O157:H7.